The primary structure comprises 319 residues: ATP-dependent 6-phosphofructokinase (319 aa).

Gly11 serves as a coordination point for ATP. 21 to 25 is a binding site for ADP; it reads RAVVR. Residues 72 to 73 and 102 to 105 contribute to the ATP site; these read RC and GDGS. Residue Asp103 coordinates Mg(2+). 125-127 is a substrate binding site; the sequence is TID. Asp127 serves as the catalytic Proton acceptor. Arg154 serves as a coordination point for ADP. Residues Arg162 and 169–171 each bind substrate; that span reads MGR. Residues 185-187, Arg211, and 213-215 contribute to the ADP site; these read GAE and KKH. Substrate is bound by residues Glu222, Arg243, and 249-252; that span reads HVQR.

This sequence belongs to the phosphofructokinase type A (PFKA) family. ATP-dependent PFK group I subfamily. Prokaryotic clade 'B1' sub-subfamily. As to quaternary structure, homotetramer. It depends on Mg(2+) as a cofactor.

It localises to the cytoplasm. The enzyme catalyses beta-D-fructose 6-phosphate + ATP = beta-D-fructose 1,6-bisphosphate + ADP + H(+). The protein operates within carbohydrate degradation; glycolysis; D-glyceraldehyde 3-phosphate and glycerone phosphate from D-glucose: step 3/4. With respect to regulation, allosterically activated by ADP and other diphosphonucleosides, and allosterically inhibited by phosphoenolpyruvate. Catalyzes the phosphorylation of D-fructose 6-phosphate to fructose 1,6-bisphosphate by ATP, the first committing step of glycolysis. This is ATP-dependent 6-phosphofructokinase from Bacillus anthracis (strain A0248).